Here is a 190-residue protein sequence, read N- to C-terminus: Peptidyl-tRNA hydrolase (190 aa).

Residue Tyr14 coordinates tRNA. Catalysis depends on His19, which acts as the Proton acceptor. TRNA is bound by residues Tyr64, Asn66, and Asn112.

This sequence belongs to the PTH family. As to quaternary structure, monomer.

The protein resides in the cytoplasm. It carries out the reaction an N-acyl-L-alpha-aminoacyl-tRNA + H2O = an N-acyl-L-amino acid + a tRNA + H(+). In terms of biological role, hydrolyzes ribosome-free peptidyl-tRNAs (with 1 or more amino acids incorporated), which drop off the ribosome during protein synthesis, or as a result of ribosome stalling. Catalyzes the release of premature peptidyl moieties from peptidyl-tRNA molecules trapped in stalled 50S ribosomal subunits, and thus maintains levels of free tRNAs and 50S ribosomes. The sequence is that of Peptidyl-tRNA hydrolase from Chlorobium chlorochromatii (strain CaD3).